We begin with the raw amino-acid sequence, 213 residues long: Protein-L-isoaspartate O-methyltransferase (213 aa).

Ser-64 is an active-site residue.

This sequence belongs to the methyltransferase superfamily. L-isoaspartyl/D-aspartyl protein methyltransferase family.

The protein resides in the cytoplasm. The enzyme catalyses [protein]-L-isoaspartate + S-adenosyl-L-methionine = [protein]-L-isoaspartate alpha-methyl ester + S-adenosyl-L-homocysteine. Functionally, catalyzes the methyl esterification of L-isoaspartyl residues in peptides and proteins that result from spontaneous decomposition of normal L-aspartyl and L-asparaginyl residues. It plays a role in the repair and/or degradation of damaged proteins. The chain is Protein-L-isoaspartate O-methyltransferase from Christiangramia forsetii (strain DSM 17595 / CGMCC 1.15422 / KT0803) (Gramella forsetii).